The primary structure comprises 93 residues: Acylphosphatase (93 aa).

Cysteines 5 and 49 form a disulfide. An Acylphosphatase-like domain is found at 5 to 93 (CTIAWIYGRV…ETLTDFSIRY (89 aa)). Catalysis depends on residues arginine 20 and asparagine 38.

The protein belongs to the acylphosphatase family.

The catalysed reaction is an acyl phosphate + H2O = a carboxylate + phosphate + H(+). The polypeptide is Acylphosphatase (Salmonella arizonae (strain ATCC BAA-731 / CDC346-86 / RSK2980)).